Reading from the N-terminus, the 232-residue chain is MSVVNSIRAQIPPIHREGYPFIGAFALATLVLFLIWAPLGWIGTVLTIWCLLFFRDPVRVTPVREGLVVAPADGRVSMVVQIIPPPALGLGDKPLPRVSIFMSVFNCHVNRSPVAGRVERIIYSPGKFINAELDKASEDNERNSLVISTPAGQIGVVQIAGLVARRIVAFVREGQPLAAGERFGLIRFGSRLDVYLPEGAKPLVSEGQTAIAGETVLADFSLGDGGRTYRAD.

Ser-190 acts as the Schiff-base intermediate with substrate; via pyruvic acid in catalysis. Ser-190 is subject to Pyruvic acid (Ser); by autocatalysis.

Belongs to the phosphatidylserine decarboxylase family. PSD-A subfamily. In terms of assembly, heterodimer of a large membrane-associated beta subunit and a small pyruvoyl-containing alpha subunit. The cofactor is pyruvate. Is synthesized initially as an inactive proenzyme. Formation of the active enzyme involves a self-maturation process in which the active site pyruvoyl group is generated from an internal serine residue via an autocatalytic post-translational modification. Two non-identical subunits are generated from the proenzyme in this reaction, and the pyruvate is formed at the N-terminus of the alpha chain, which is derived from the carboxyl end of the proenzyme. The post-translation cleavage follows an unusual pathway, termed non-hydrolytic serinolysis, in which the side chain hydroxyl group of the serine supplies its oxygen atom to form the C-terminus of the beta chain, while the remainder of the serine residue undergoes an oxidative deamination to produce ammonia and the pyruvoyl prosthetic group on the alpha chain.

The protein localises to the cell membrane. The enzyme catalyses a 1,2-diacyl-sn-glycero-3-phospho-L-serine + H(+) = a 1,2-diacyl-sn-glycero-3-phosphoethanolamine + CO2. The protein operates within phospholipid metabolism; phosphatidylethanolamine biosynthesis; phosphatidylethanolamine from CDP-diacylglycerol: step 2/2. In terms of biological role, catalyzes the formation of phosphatidylethanolamine (PtdEtn) from phosphatidylserine (PtdSer). In Rhodopseudomonas palustris (strain HaA2), this protein is Phosphatidylserine decarboxylase proenzyme.